We begin with the raw amino-acid sequence, 321 residues long: MAEAEAGGDEARCVRLSAERAKLLLAEVDTLLFDCDGVLWRGETAVPGAPETLRALRARGKRLGFITNNSSKTRTAYAEKLRRLGFGGPVGPEAGLEVFGTAYCSALYLRQRLAGVPDPKAYVLGSPALAAELEAVGVTSVGVGPDVLHGDGPSDWLAVPLEPDVRAVVVGFDPHFSYMKLTKAVRYLQQPDCLLVGTNMDNRLPLENGRFIAGTGCLVRAVEMAAQRQADIIGKPSRFIFDCVSQEYGINPERTVMVGDRLDTDILLGSTCSLKTILTLTGVSSLEDVKSNQESDCMFKKKMVPDFYVDSIADLLPALQG.

Aspartate 34 serves as the catalytic Nucleophile. Mg(2+) is bound by residues aspartate 34, aspartate 36, and aspartate 260. Aspartate 36 functions as the Proton donor in the catalytic mechanism.

It belongs to the HAD-like hydrolase superfamily. CbbY/CbbZ/Gph/YieH family. In terms of assembly, homodimer. The cofactor is Mg(2+). As to expression, ubiquitously expressed with higher expression in testis, heart, skeletal muscle and islet tissue (at protein level).

The enzyme catalyses O-phospho-L-tyrosyl-[protein] + H2O = L-tyrosyl-[protein] + phosphate. It carries out the reaction sn-glycerol 1-phosphate + H2O = glycerol + phosphate. It catalyses the reaction sn-glycerol 3-phosphate + H2O = glycerol + phosphate. Inhibited by orthovanadate, beryllium trifluoride, Ca(2+) and EDTA. Its function is as follows. Glycerol-3-phosphate phosphatase hydrolyzing glycerol-3-phosphate into glycerol. Thereby, regulates the cellular levels of glycerol-3-phosphate a metabolic intermediate of glucose, lipid and energy metabolism. Was also shown to have a 2-phosphoglycolate phosphatase activity and a tyrosine-protein phosphatase activity. However, their physiological relevance is unclear. In vitro, also has a phosphatase activity toward ADP, ATP, GDP and GTP. The polypeptide is Glycerol-3-phosphate phosphatase (Mus musculus (Mouse)).